Consider the following 116-residue polypeptide: Large ribosomal subunit protein bL20c (116 aa).

It belongs to the bacterial ribosomal protein bL20 family.

The protein localises to the plastid. The protein resides in the chloroplast. Functionally, binds directly to 23S ribosomal RNA and is necessary for the in vitro assembly process of the 50S ribosomal subunit. It is not involved in the protein synthesizing functions of that subunit. In Oltmannsiellopsis viridis (Marine flagellate), this protein is Large ribosomal subunit protein bL20c.